The following is a 101-amino-acid chain: uncharacterized protein (101 aa).

A signal peptide spans 1-27 (MQLTGSIYPWFTAYALLKSTLMELINS). Transmembrane regions (helical) follow at residues 42 to 64 (LVPY…AISF) and 79 to 98 (TFVF…NTFL).

The protein localises to the cytoplasm. It localises to the nucleus membrane. This is an uncharacterized protein from Schizosaccharomyces pombe (strain 972 / ATCC 24843) (Fission yeast).